The sequence spans 325 residues: Aldo-keto reductase family 1 member A1 (325 aa).

Ala2 is modified (N-acetylalanine). Ser4 is subject to Phosphoserine. Residues Gly11 to Gly20, Thr21, Trp22, and Asp45 contribute to the NADP(+) site. Catalysis depends on Tyr50, which acts as the Proton donor. Lys127 is subject to N6-acetyllysine; alternate. Residue Lys127 is modified to N6-succinyllysine; alternate. The residue at position 145 (Lys145) is an N6-succinyllysine. 13 residues coordinate NADP(+): Ser162, Asn163, Ser211, Leu213, Ser215, Ser216, Lys263, Ser264, Val265, Thr266, Arg269, Gln272, and Asn273. A Phosphoserine modification is found at Ser211.

This sequence belongs to the aldo/keto reductase family. In terms of assembly, monomer.

Its subcellular location is the cytoplasm. The protein resides in the cytosol. It is found in the apical cell membrane. It catalyses the reaction a primary alcohol + NADP(+) = an aldehyde + NADPH + H(+). The enzyme catalyses glycerol + NADP(+) = D-glyceraldehyde + NADPH + H(+). It carries out the reaction glycerol + NADP(+) = L-glyceraldehyde + NADPH + H(+). The catalysed reaction is L-gulonate + NADP(+) = aldehydo-D-glucuronate + NADPH + H(+). It catalyses the reaction L-gulono-1,4-lactone + NADP(+) = D-glucurono-3,6-lactone + NADPH + H(+). The enzyme catalyses allyl alcohol + NADP(+) = acrolein + NADPH + H(+). It carries out the reaction hydroxyacetone + NADP(+) = methylglyoxal + NADPH + H(+). The catalysed reaction is 3-deoxyfructose + NADP(+) = 3-deoxyglucosone + NADPH + H(+). It catalyses the reaction (R)-mevalonate + NADP(+) = (R)-mevaldate + NADPH + H(+). The enzyme catalyses pyridine 3-methanol + NADP(+) = pyridine-3-carbaldehyde + NADPH + H(+). It carries out the reaction S-nitroso-CoA + NADPH + H(+) = sulfinamide-CoA + NADP(+). The catalysed reaction is S-nitrosoglutathione + NADPH + H(+) = S-(hydroxysulfenamide)glutathione + NADP(+). In terms of biological role, catalyzes the NADPH-dependent reduction of a wide variety of carbonyl-containing compounds to their corresponding alcohols. Displays enzymatic activity towards endogenous metabolites such as aromatic and aliphatic aldehydes, ketones, monosaccharides and bile acids, with a preference for negatively charged substrates, such as glucuronate and succinic semialdehyde. Plays an important role in ascorbic acid biosynthesis by catalyzing the reduction of D-glucuronic acid and D-glucurono-gamma-lactone. Functions as a detoxifiying enzyme by reducing a range of toxic aldehydes. Reduces methylglyoxal and 3-deoxyglucosone, which are present at elevated levels under hyperglycemic conditions and are cytotoxic. Involved also in the detoxification of lipid-derived aldehydes like acrolein. Plays a role in the activation of procarcinogens, such as polycyclic aromatic hydrocarbon trans-dihydrodiols, and in the metabolism of various xenobiotics and drugs. Also acts as an inhibitor of protein S-nitrosylation by mediating degradation of S-nitroso-coenzyme A (S-nitroso-CoA), a cofactor required to S-nitrosylate proteins. S-nitroso-CoA reductase activity is involved in reprogramming intermediary metabolism in renal proximal tubules, notably by inhibiting protein S-nitrosylation of isoform 2 of PKM (PKM2). Also acts as a S-nitroso-glutathione reductase by catalyzing the NADPH-dependent reduction of S-nitrosoglutathione. Displays no reductase activity towards retinoids. The sequence is that of Aldo-keto reductase family 1 member A1 (AKR1A1) from Sus scrofa (Pig).